Here is a 255-residue protein sequence, read N- to C-terminus: Leucyl/phenylalanyl-tRNA--protein transferase (255 aa).

Belongs to the L/F-transferase family.

Its subcellular location is the cytoplasm. It catalyses the reaction N-terminal L-lysyl-[protein] + L-leucyl-tRNA(Leu) = N-terminal L-leucyl-L-lysyl-[protein] + tRNA(Leu) + H(+). The catalysed reaction is N-terminal L-arginyl-[protein] + L-leucyl-tRNA(Leu) = N-terminal L-leucyl-L-arginyl-[protein] + tRNA(Leu) + H(+). It carries out the reaction L-phenylalanyl-tRNA(Phe) + an N-terminal L-alpha-aminoacyl-[protein] = an N-terminal L-phenylalanyl-L-alpha-aminoacyl-[protein] + tRNA(Phe). In terms of biological role, functions in the N-end rule pathway of protein degradation where it conjugates Leu, Phe and, less efficiently, Met from aminoacyl-tRNAs to the N-termini of proteins containing an N-terminal arginine or lysine. This Burkholderia pseudomallei (strain 668) protein is Leucyl/phenylalanyl-tRNA--protein transferase.